Here is a 161-residue protein sequence, read N- to C-terminus: uncharacterized protein (161 aa).

This is an uncharacterized protein from Encephalitozoon cuniculi (strain GB-M1) (Microsporidian parasite).